Reading from the N-terminus, the 230-residue chain is Large ribosomal subunit protein uL1 (230 aa).

Belongs to the universal ribosomal protein uL1 family. As to quaternary structure, part of the 50S ribosomal subunit.

Functionally, binds directly to 23S rRNA. The L1 stalk is quite mobile in the ribosome, and is involved in E site tRNA release. Its function is as follows. Protein L1 is also a translational repressor protein, it controls the translation of the L11 operon by binding to its mRNA. This Bacillus mycoides (strain KBAB4) (Bacillus weihenstephanensis) protein is Large ribosomal subunit protein uL1.